The primary structure comprises 415 residues: MQMSYAIRCAFYQLLLAALMLVAMLQLLYLSLLSGLHGQEEQDQYFEFFPPSPRSVDQVKTQLRTALASGGVLDASGDYRVYRGLLKTTMDPNDVILATHASVDNLLHLSGLLERWEGPLSVSVFAATKEEAQLATVLAYALSSHCPDMRARVAMHLVCPSRYEAAVPDPREPGEFALLRSCQEVFDKLARVAQPGINYALGTNVSYPNNLLRNLAREGANYALVIDVDMVPSEGLWRGLREMLDQSNQWGGTALVVPAFEIRRARRMPMNKNELVQLYQVGEVRPFYYGLCTPCQAPTNYSRWVNLPEESLLRPAYVVPWQDPWEPFYVAGGKVPTFDERFRQYGFNRISQACELHVAGFDFEVLNEGFLVHKGFKEALKFHPQKEAENQHNKILYRQFKQELKAKYPNSPRRC.

At 1 to 8 (MQMSYAIR) the chain is on the cytoplasmic side. A helical; Signal-anchor for type II membrane protein membrane pass occupies residues 9 to 36 (CAFYQLLLAALMLVAMLQLLYLSLLSGL). Topologically, residues 37–415 (HGQEEQDQYF…AKYPNSPRRC (379 aa)) are lumenal. Residue asparagine 204 is glycosylated (N-linked (GlcNAc...) asparagine). Residues aspartate 227 and aspartate 229 each coordinate Mn(2+). N-linked (GlcNAc...) asparagine glycosylation occurs at asparagine 300.

It belongs to the glycosyltransferase 49 family. As to quaternary structure, interacts with LARGE1 and LARGE2. Mn(2+) is required as a cofactor.

The protein resides in the golgi apparatus membrane. The catalysed reaction is 3-O-[beta-D-Xyl-(1-&gt;4)-Rib-ol-P-Rib-ol-P-3-beta-D-GalNAc-(1-&gt;3)-beta-D-GlcNAc-(1-&gt;4)-(O-6-P-alpha-D-Man)]-Thr-[protein] + UDP-alpha-D-glucuronate = 3-O-[beta-D-GlcA-(1-&gt;3)-beta-D-Xyl-(1-&gt;4)-Rib-ol-P-Rib-ol-P-3-beta-D-GalNAc-(1-&gt;3)-beta-D-GlcNAc-(1-&gt;4)-(O-6-P-alpha-D-Man)]-Thr-[protein] + UDP + H(+). It functions in the pathway protein modification; protein glycosylation. In terms of biological role, beta-1,4-glucuronyltransferase involved in O-mannosylation of alpha-dystroglycan (DAG1). Transfers a glucuronic acid (GlcA) residue onto a xylose (Xyl) acceptor to produce the glucuronyl-beta-1,4-xylose-beta disaccharide primer, which is further elongated by LARGE1, during synthesis of phosphorylated O-mannosyl glycan. Phosphorylated O-mannosyl glycan is a carbohydrate structure present in alpha-dystroglycan (DAG1), which is required for binding laminin G-like domain-containing extracellular proteins with high affinity. Required for axon guidance; via its function in O-mannosylation of alpha-dystroglycan (DAG1). The sequence is that of Beta-1,4-glucuronyltransferase 1 from Pongo abelii (Sumatran orangutan).